The sequence spans 723 residues: Catalase-peroxidase (723 aa).

Positions 89-212 (WHSAGTYRTG…LAAVQMGLIY (124 aa)) form a cross-link, tryptophyl-tyrosyl-methioninium (Trp-Tyr) (with M-238). Catalysis depends on His-90, which acts as the Proton acceptor. A cross-link (tryptophyl-tyrosyl-methioninium (Tyr-Met) (with W-89)) is located at residues 212–238 (YVNPEGPNGDPDPFAAAVDIRETFARM). His-253 contacts heme b.

This sequence belongs to the peroxidase family. Peroxidase/catalase subfamily. In terms of assembly, homodimer or homotetramer. Heme b is required as a cofactor. In terms of processing, formation of the three residue Trp-Tyr-Met cross-link is important for the catalase, but not the peroxidase activity of the enzyme.

The enzyme catalyses H2O2 + AH2 = A + 2 H2O. The catalysed reaction is 2 H2O2 = O2 + 2 H2O. Its function is as follows. Bifunctional enzyme with both catalase and broad-spectrum peroxidase activity. This Shewanella baltica (strain OS185) protein is Catalase-peroxidase.